We begin with the raw amino-acid sequence, 270 residues long: Putative pyruvate, phosphate dikinase regulatory protein (270 aa).

149-156 is a binding site for ADP; the sequence is GVSRTSKT.

This sequence belongs to the pyruvate, phosphate/water dikinase regulatory protein family. PDRP subfamily.

The enzyme catalyses N(tele)-phospho-L-histidyl/L-threonyl-[pyruvate, phosphate dikinase] + ADP = N(tele)-phospho-L-histidyl/O-phospho-L-threonyl-[pyruvate, phosphate dikinase] + AMP + H(+). The catalysed reaction is N(tele)-phospho-L-histidyl/O-phospho-L-threonyl-[pyruvate, phosphate dikinase] + phosphate + H(+) = N(tele)-phospho-L-histidyl/L-threonyl-[pyruvate, phosphate dikinase] + diphosphate. Its function is as follows. Bifunctional serine/threonine kinase and phosphorylase involved in the regulation of the pyruvate, phosphate dikinase (PPDK) by catalyzing its phosphorylation/dephosphorylation. The polypeptide is Putative pyruvate, phosphate dikinase regulatory protein (Thermoanaerobacter pseudethanolicus (strain ATCC 33223 / 39E) (Clostridium thermohydrosulfuricum)).